A 967-amino-acid chain; its full sequence is Phosphatidylserine decarboxylase proenzyme 3 (967 aa).

A disordered region spans residues 217 to 255 (FIAEPDSSIPPSESSVSISTDTGKETPPSKSKKSSNQPY). The segment covering 220–237 (EPDSSIPPSESSVSISTD) has biased composition (low complexity). Residues 250 to 373 (SSNQPYVSIG…SSAQVDPETG (124 aa)) form the C2 domain. Ca(2+)-binding residues include aspartate 343, serine 346, and aspartate 349. The span at 532–544 (DQQATQTPQSPSS) shows a compositional bias: low complexity. Positions 532 to 566 (DQQATQTPQSPSSNEESGPGTPTQTSDQYEDSEDS) are disordered. Positions 545–558 (NEESGPGTPTQTSD) are enriched in polar residues. Active-site charge relay system; for autoendoproteolytic cleavage activity residues include aspartate 769, histidine 825, and serine 912. The Schiff-base intermediate with substrate; via pyruvic acid; for decarboxylase activity role is filled by serine 912. Serine 912 is subject to Pyruvic acid (Ser); by autocatalysis. A disordered region spans residues 947–967 (IGQKIDPNKPTDAEDHSKSDS).

Belongs to the phosphatidylserine decarboxylase family. PSD-B subfamily. Eukaryotic type II sub-subfamily. In terms of assembly, heterodimer of a large membrane-associated beta subunit and a small pyruvoyl-containing alpha subunit. Requires pyruvate as cofactor. The cofactor is Ca(2+). Post-translationally, is synthesized initially as an inactive proenzyme. Formation of the active enzyme involves a self-maturation process in which the active site pyruvoyl group is generated from an internal serine residue via an autocatalytic post-translational modification. Two non-identical subunits are generated from the proenzyme in this reaction, and the pyruvate is formed at the N-terminus of the alpha chain, which is derived from the carboxyl end of the proenzyme. The autoendoproteolytic cleavage occurs by a canonical serine protease mechanism, in which the side chain hydroxyl group of the serine supplies its oxygen atom to form the C-terminus of the beta chain, while the remainder of the serine residue undergoes an oxidative deamination to produce ammonia and the pyruvoyl prosthetic group on the alpha chain. During this reaction, the Ser that is part of the protease active site of the proenzyme becomes the pyruvoyl prosthetic group, which constitutes an essential element of the active site of the mature decarboxylase.

It is found in the golgi apparatus membrane. The protein resides in the endosome membrane. Its subcellular location is the cytoplasm. The enzyme catalyses a 1,2-diacyl-sn-glycero-3-phospho-L-serine + H(+) = a 1,2-diacyl-sn-glycero-3-phosphoethanolamine + CO2. The protein operates within phospholipid metabolism; phosphatidylethanolamine biosynthesis; phosphatidylethanolamine from CDP-diacylglycerol: step 2/2. In terms of biological role, catalyzes the formation of phosphatidylethanolamine (PtdEtn) from phosphatidylserine (PtdSer). Plays a central role in phospholipid metabolism and in the interorganelle trafficking of phosphatidylserine. Together with psd1 and psd2, responsible for the majority of phosphatidylethanolamine synthesis. The protein is Phosphatidylserine decarboxylase proenzyme 3 of Schizosaccharomyces pombe (strain 972 / ATCC 24843) (Fission yeast).